We begin with the raw amino-acid sequence, 459 residues long: Friend virus susceptibility protein 1 (459 aa).

Residues 192-269 form a disordered region; it reads EAELPTVLAS…LNSLAHSNRQ (78 aa). Basic and acidic residues predominate over residues 213 to 223; it reads SKERTQQDKAD. Positions 226-238 are enriched in polar residues; sequence QIQSSTSLVTSEP.

Retroviral restriction factor that prevents infection by gammaretroviruses. Acts by interacting with the capsid protein ca after entry of the virus into the cell. This interaction presumably disrupt the capsid thereby inactivating the viral genome, making it unable to enter host nucleus and integrate into host genome. The protein is Friend virus susceptibility protein 1 (Fv1) of Mus musculus (Mouse).